We begin with the raw amino-acid sequence, 219 residues long: Protein DMP5 (219 aa).

The segment at 1–24 (MSALRLRNANTPAPELDELSDQTP) is disordered. 4 helical membrane passes run 51-71 (LSNLLPTGTLLAFQLLTPVFT), 82-102 (FLTAVLLFLLAASCFVSSFTD), 142-162 (MRFVDWIHATLSVLVFGAVAL), and 182-202 (VLDIVPVGVGVMCSLLFMVFP).

It belongs to the plant DMP1 protein family.

It is found in the endoplasmic reticulum membrane. Its function is as follows. Involved in membrane remodeling. The polypeptide is Protein DMP5 (Arabidopsis thaliana (Mouse-ear cress)).